A 382-amino-acid chain; its full sequence is Mannitol-1-phosphate 5-dehydrogenase (382 aa).

3–14 (ALHFGAGNIGRG) is an NAD(+) binding site. Residue K269 is modified to N6-acetyllysine.

It belongs to the mannitol dehydrogenase family.

The catalysed reaction is D-mannitol 1-phosphate + NAD(+) = beta-D-fructose 6-phosphate + NADH + H(+). The sequence is that of Mannitol-1-phosphate 5-dehydrogenase from Shigella sonnei (strain Ss046).